We begin with the raw amino-acid sequence, 351 residues long: Protein Wnt-8a (351 aa).

The N-terminal stretch at 1–24 (MGNLFMLWAALGICCAAFSASAWS) is a signal peptide. Cys-54 and Cys-65 are disulfide-bonded. A glycan (N-linked (GlcNAc...) asparagine) is linked at Asn-103. 10 cysteine pairs are disulfide-bonded: Cys-104-Cys-112, Cys-114-Cys-132, Cys-180-Cys-194, Cys-182-Cys-189, Cys-259-Cys-297, Cys-275-Cys-290, Cys-294-Cys-336, Cys-312-Cys-327, Cys-314-Cys-324, and Cys-319-Cys-320. The O-palmitoleoyl serine moiety is linked to residue Ser-186. Asn-262 and Asn-281 each carry an N-linked (GlcNAc...) asparagine glycan.

Belongs to the Wnt family. In terms of assembly, forms a soluble 1:1 complex with AFM; this prevents oligomerization and is required for prolonged biological activity. The complex with AFM may represent the physiological form in body fluids. Post-translationally, palmitoleoylation is required for efficient binding to frizzled receptors. Depalmitoleoylation leads to Wnt signaling pathway inhibition. In terms of processing, proteolytic processing by TIKI1 and TIKI2 promotes oxidation and formation of large disulfide-bond oligomers, leading to inactivation of WNT8A.

It is found in the secreted. Its subcellular location is the extracellular space. It localises to the extracellular matrix. Its function is as follows. Ligand for members of the frizzled family of seven transmembrane receptors. Plays a role in embryonic patterning. This Homo sapiens (Human) protein is Protein Wnt-8a (WNT8A).